A 154-amino-acid chain; its full sequence is 6,7-dimethyl-8-ribityllumazine synthase (154 aa).

Residues Phe-22, 56–58 (AFE), and 80–82 (AVI) contribute to the 5-amino-6-(D-ribitylamino)uracil site. Residue 85–86 (ET) coordinates (2S)-2-hydroxy-3-oxobutyl phosphate. The Proton donor role is filled by His-88. Phe-113 is a binding site for 5-amino-6-(D-ribitylamino)uracil. Arg-127 lines the (2S)-2-hydroxy-3-oxobutyl phosphate pocket.

Belongs to the DMRL synthase family.

It carries out the reaction (2S)-2-hydroxy-3-oxobutyl phosphate + 5-amino-6-(D-ribitylamino)uracil = 6,7-dimethyl-8-(1-D-ribityl)lumazine + phosphate + 2 H2O + H(+). It functions in the pathway cofactor biosynthesis; riboflavin biosynthesis; riboflavin from 2-hydroxy-3-oxobutyl phosphate and 5-amino-6-(D-ribitylamino)uracil: step 1/2. Catalyzes the formation of 6,7-dimethyl-8-ribityllumazine by condensation of 5-amino-6-(D-ribitylamino)uracil with 3,4-dihydroxy-2-butanone 4-phosphate. This is the penultimate step in the biosynthesis of riboflavin. In Thermoanaerobacter pseudethanolicus (strain ATCC 33223 / 39E) (Clostridium thermohydrosulfuricum), this protein is 6,7-dimethyl-8-ribityllumazine synthase.